A 198-amino-acid polypeptide reads, in one-letter code: Sensory transduction protein RegX3 (198 aa).

Residues 1-87 form the Response regulatory domain; sequence MVTDGPAALA…ELIARIRAVL (87 aa). A 4-aspartylphosphate modification is found at aspartate 23. The ompR/PhoB-type DNA-binding region spans 99–198; that stretch reads DGVLESGPLR…VRGLGYKLES (100 aa).

Post-translationally, phosphorylated by SenX3.

Functionally, member of the two-component regulatory system SenX3/RegX3. This Mycobacterium leprae (strain TN) protein is Sensory transduction protein RegX3 (rgx3).